The chain runs to 345 residues: Dihydroorotase (345 aa).

Zn(2+) is bound by residues histidine 13 and histidine 15. Substrate contacts are provided by residues 15–17 (HLR) and asparagine 41. Residues lysine 99, histidine 136, and histidine 174 each contribute to the Zn(2+) site. The residue at position 99 (lysine 99) is an N6-carboxylysine. A substrate-binding site is contributed by histidine 136. Leucine 219 is a substrate binding site. Aspartate 247 provides a ligand contact to Zn(2+). Aspartate 247 is an active-site residue. Residues histidine 251 and alanine 263 each contribute to the substrate site.

The protein belongs to the metallo-dependent hydrolases superfamily. DHOase family. Class II DHOase subfamily. Homodimer. Requires Zn(2+) as cofactor.

It carries out the reaction (S)-dihydroorotate + H2O = N-carbamoyl-L-aspartate + H(+). Its pathway is pyrimidine metabolism; UMP biosynthesis via de novo pathway; (S)-dihydroorotate from bicarbonate: step 3/3. Catalyzes the reversible cyclization of carbamoyl aspartate to dihydroorotate. The sequence is that of Dihydroorotase from Acaryochloris marina (strain MBIC 11017).